Consider the following 166-residue polypeptide: Putative peroxiredoxin (166 aa).

A Thioredoxin domain is found at E1 to L166. C56 functions as the Cysteine sulfenic acid (-SOH) intermediate in the catalytic mechanism. Residues S164 to L166 carry the Microbody targeting signal motif.

The protein belongs to the peroxiredoxin family. Prx5 subfamily. In terms of assembly, homodimer; disulfide-linked, upon oxidation.

It catalyses the reaction a hydroperoxide + [thioredoxin]-dithiol = an alcohol + [thioredoxin]-disulfide + H2O. In terms of biological role, thiol-specific peroxidase that catalyzes the reduction of hydrogen peroxide and organic hydroperoxides to water and alcohols, respectively. Plays a role in cell protection against oxidative stress by detoxifying peroxides and as sensor of hydrogen peroxide-mediated signaling events. The sequence is that of Putative peroxiredoxin from Malassezia furfur (Pityriasis versicolor infection agent).